A 216-amino-acid chain; its full sequence is Refilin-A (216 aa).

The disordered stretch occupies residues 1-83 (MVGHLHLQGM…LPNPPASEMR (83 aa)). A compositionally biased stretch (basic and acidic residues) spans 12 to 22 (DSLKEQGREGL). The segment covering 29–39 (GLPPSPSPSPP) has biased composition (pro residues). Low complexity predominate over residues 57-71 (ASSEPPGPSEARAPP). Arg-163 carries the asymmetric dimethylarginine modification.

It belongs to the Refilin family. As to quaternary structure, interacts with FLNA and FLNB.

The protein resides in the cytoplasm. The protein localises to the cytoskeleton. Involved in the regulation of the perinuclear actin network and nuclear shape through interaction with filamins. Plays an essential role in actin cytoskeleton formation in developing cartilaginous cells. The sequence is that of Refilin-A from Homo sapiens (Human).